We begin with the raw amino-acid sequence, 211 residues long: Protein-L-isoaspartate O-methyltransferase (211 aa).

Ser-60 is an active-site residue.

The protein belongs to the methyltransferase superfamily. L-isoaspartyl/D-aspartyl protein methyltransferase family.

It localises to the cytoplasm. The catalysed reaction is [protein]-L-isoaspartate + S-adenosyl-L-methionine = [protein]-L-isoaspartate alpha-methyl ester + S-adenosyl-L-homocysteine. In terms of biological role, catalyzes the methyl esterification of L-isoaspartyl residues in peptides and proteins that result from spontaneous decomposition of normal L-aspartyl and L-asparaginyl residues. It plays a role in the repair and/or degradation of damaged proteins. The sequence is that of Protein-L-isoaspartate O-methyltransferase from Hahella chejuensis (strain KCTC 2396).